We begin with the raw amino-acid sequence, 360 residues long: 8-hydroxygeraniol dehydrogenase (360 aa).

The Zn(2+) site is built by C50, H72, C103, C106, C109, C117, and C166.

This sequence belongs to the zinc-containing alcohol dehydrogenase family. Zn(2+) is required as a cofactor. In terms of tissue distribution, present in seedlings and vascular tissues (at protein level). Restricted to the epidermis.

It carries out the reaction (6E)-8-hydroxygeraniol + 2 NADP(+) = (6E)-8-oxogeranial + 2 NADPH + 2 H(+). Its function is as follows. Dehydrogenase involved in the biosynthesis of oxogeranial from hydroxygeraniol, a precursor of the terpenoid indole alkaloids such as vinblastine and vincristine. This Catharanthus roseus (Madagascar periwinkle) protein is 8-hydroxygeraniol dehydrogenase (10HGO).